We begin with the raw amino-acid sequence, 701 residues long: Elongation factor G (701 aa).

A tr-type G domain is found at 8 to 290 (SLYRNIGISA…AVVELLPAPT (283 aa)). Residues 17 to 24 (AHIDAGKT), 88 to 92 (DTPGH), and 142 to 145 (NKMD) each bind GTP.

It belongs to the TRAFAC class translation factor GTPase superfamily. Classic translation factor GTPase family. EF-G/EF-2 subfamily.

It localises to the cytoplasm. In terms of biological role, catalyzes the GTP-dependent ribosomal translocation step during translation elongation. During this step, the ribosome changes from the pre-translocational (PRE) to the post-translocational (POST) state as the newly formed A-site-bound peptidyl-tRNA and P-site-bound deacylated tRNA move to the P and E sites, respectively. Catalyzes the coordinated movement of the two tRNA molecules, the mRNA and conformational changes in the ribosome. The sequence is that of Elongation factor G from Neisseria meningitidis serogroup C (strain 053442).